Consider the following 426-residue polypeptide: Glutamate-1-semialdehyde 2,1-aminomutase (426 aa).

K263 is subject to N6-(pyridoxal phosphate)lysine.

Belongs to the class-III pyridoxal-phosphate-dependent aminotransferase family. HemL subfamily. As to quaternary structure, homodimer. It depends on pyridoxal 5'-phosphate as a cofactor.

It localises to the cytoplasm. The enzyme catalyses (S)-4-amino-5-oxopentanoate = 5-aminolevulinate. It participates in porphyrin-containing compound metabolism; protoporphyrin-IX biosynthesis; 5-aminolevulinate from L-glutamyl-tRNA(Glu): step 2/2. The polypeptide is Glutamate-1-semialdehyde 2,1-aminomutase (Caldicellulosiruptor bescii (strain ATCC BAA-1888 / DSM 6725 / KCTC 15123 / Z-1320) (Anaerocellum thermophilum)).